The chain runs to 131 residues: D-ribose pyranase (131 aa).

His20 functions as the Proton donor in the catalytic mechanism. Substrate contacts are provided by residues Asp28, His98, and 120–122; that span reads YCN.

The protein belongs to the RbsD / FucU family. RbsD subfamily. Homodecamer.

It is found in the cytoplasm. It carries out the reaction beta-D-ribopyranose = beta-D-ribofuranose. It functions in the pathway carbohydrate metabolism; D-ribose degradation; D-ribose 5-phosphate from beta-D-ribopyranose: step 1/2. Catalyzes the interconversion of beta-pyran and beta-furan forms of D-ribose. This Coprothermobacter proteolyticus (strain ATCC 35245 / DSM 5265 / OCM 4 / BT) protein is D-ribose pyranase.